The sequence spans 1113 residues: uncharacterized protein (1113 aa).

313 to 320 (GPPGTGKS) provides a ligand contact to ATP.

This sequence belongs to the DNA2/NAM7 helicase family.

This is an uncharacterized protein from Mycoplasma pneumoniae (strain ATCC 29342 / M129 / Subtype 1) (Mycoplasmoides pneumoniae).